The following is a 363-amino-acid chain: tRNA dimethylallyltransferase (363 aa).

Position 65 to 72 (65 to 72 (GPTASGKS)) interacts with ATP. 67–72 (TASGKS) contributes to the substrate binding site. 2 interaction with substrate tRNA regions span residues 90 to 93 (DSMQ) and 214 to 218 (QRLIR).

It belongs to the IPP transferase family. In terms of assembly, monomer. Mg(2+) is required as a cofactor.

It carries out the reaction adenosine(37) in tRNA + dimethylallyl diphosphate = N(6)-dimethylallyladenosine(37) in tRNA + diphosphate. In terms of biological role, catalyzes the transfer of a dimethylallyl group onto the adenine at position 37 in tRNAs that read codons beginning with uridine, leading to the formation of N6-(dimethylallyl)adenosine (i(6)A). In Rickettsia massiliae (strain Mtu5), this protein is tRNA dimethylallyltransferase.